Consider the following 148-residue polypeptide: Nickel and cobalt resistance protein CnrR (148 aa).

The signal sequence occupies residues 1–26 (MMKSRTRRLSLSTLFGALLGVSVAAA). The Periplasmic portion of the chain corresponds to 28-148 (LYYSHRNEAG…LIDALRRGSQ (121 aa)). Residues 54–117 (NEREILELKE…AAGDLQRATL (64 aa)) are a coiled coil.

To A.xylosoxydans NccX.

The protein resides in the periplasm. Functionally, cnrH alone is able to activate cnr expression, while both CnrY and CrnR (CnrX) are needed for nickel induction of CnrH. Has been suggested to bind nickel. The protein is Nickel and cobalt resistance protein CnrR (cnrR) of Cupriavidus metallidurans (strain ATCC 43123 / DSM 2839 / NBRC 102507 / CH34) (Ralstonia metallidurans).